Reading from the N-terminus, the 245-residue chain is Ubiquinone/menaquinone biosynthesis C-methyltransferase UbiE (245 aa).

S-adenosyl-L-methionine is bound by residues threonine 71, aspartate 92, and 118-119 (DA).

Belongs to the class I-like SAM-binding methyltransferase superfamily. MenG/UbiE family.

The enzyme catalyses a 2-demethylmenaquinol + S-adenosyl-L-methionine = a menaquinol + S-adenosyl-L-homocysteine + H(+). It carries out the reaction a 2-methoxy-6-(all-trans-polyprenyl)benzene-1,4-diol + S-adenosyl-L-methionine = a 5-methoxy-2-methyl-3-(all-trans-polyprenyl)benzene-1,4-diol + S-adenosyl-L-homocysteine + H(+). The protein operates within quinol/quinone metabolism; menaquinone biosynthesis; menaquinol from 1,4-dihydroxy-2-naphthoate: step 2/2. It participates in cofactor biosynthesis; ubiquinone biosynthesis. In terms of biological role, methyltransferase required for the conversion of demethylmenaquinol (DMKH2) to menaquinol (MKH2) and the conversion of 2-polyprenyl-6-methoxy-1,4-benzoquinol (DDMQH2) to 2-polyprenyl-3-methyl-6-methoxy-1,4-benzoquinol (DMQH2). This Neisseria meningitidis serogroup C / serotype 2a (strain ATCC 700532 / DSM 15464 / FAM18) protein is Ubiquinone/menaquinone biosynthesis C-methyltransferase UbiE.